The sequence spans 128 residues: uncharacterized protein (128 aa).

3 consecutive transmembrane segments (helical) span residues 19-41 (MAIV…YVGS), 54-71 (LTFL…SIMQ), and 75-97 (PLIA…VDNL).

It localises to the cell membrane. This is an uncharacterized protein from Pasteurella multocida (strain Pm70).